A 695-amino-acid chain; its full sequence is Glycine--tRNA ligase beta subunit (695 aa).

The protein belongs to the class-II aminoacyl-tRNA synthetase family. As to quaternary structure, tetramer of two alpha and two beta subunits.

The protein resides in the cytoplasm. The enzyme catalyses tRNA(Gly) + glycine + ATP = glycyl-tRNA(Gly) + AMP + diphosphate. The sequence is that of Glycine--tRNA ligase beta subunit from Desulforamulus reducens (strain ATCC BAA-1160 / DSM 100696 / MI-1) (Desulfotomaculum reducens).